The primary structure comprises 286 residues: Ribose-phosphate pyrophosphokinase (286 aa).

ATP-binding positions include 34–36 (DGE) and 91–93 (RQH). Residues H124 and D161 each coordinate Mg(2+). K184 is an active-site residue. D-ribose 5-phosphate is bound by residues R186, D210, and 214-218 (STGGT).

It belongs to the ribose-phosphate pyrophosphokinase family. Class III (archaeal) subfamily. As to quaternary structure, homodimer. Mg(2+) serves as cofactor.

It is found in the cytoplasm. It catalyses the reaction D-ribose 5-phosphate + ATP = 5-phospho-alpha-D-ribose 1-diphosphate + AMP + H(+). It participates in metabolic intermediate biosynthesis; 5-phospho-alpha-D-ribose 1-diphosphate biosynthesis; 5-phospho-alpha-D-ribose 1-diphosphate from D-ribose 5-phosphate (route I): step 1/1. Its function is as follows. Involved in the biosynthesis of the central metabolite phospho-alpha-D-ribosyl-1-pyrophosphate (PRPP) via the transfer of pyrophosphoryl group from ATP to 1-hydroxyl of ribose-5-phosphate (Rib-5-P). In Thermoplasma volcanium (strain ATCC 51530 / DSM 4299 / JCM 9571 / NBRC 15438 / GSS1), this protein is Ribose-phosphate pyrophosphokinase.